The following is a 116-amino-acid chain: Carbohydrate-binding protein AQN-3 (116 aa).

A disulfide bridge connects residues Cys9 and Cys30. The CUB domain occupies 9–110 (CGGFLKNYSG…SSFNVYFYGI (102 aa)). Residue Asn50 is glycosylated (N-linked (GlcNAc...) asparagine). Residues Cys53 and Cys74 are joined by a disulfide bond. A Methylhistidine modification is found at His85.

It belongs to the spermadhesin family. In terms of processing, the residue at position 85 was identified as a methylhistidine by mass spectrometry.

It localises to the secreted. Functionally, AQN proteins mediate the binding of boar spermatozoa to component(s) of the egg's zona pellucida by a carbohydrate-binding mechanism. AQN proteins are secretory components of the male accessory glands being coated to the sperm surface at the time of ejaculation. They possess as well heparin-, serine-protease-inhibitor-binding capability. The protein is Carbohydrate-binding protein AQN-3 of Sus scrofa (Pig).